A 466-amino-acid polypeptide reads, in one-letter code: 3-isopropylmalate dehydratase large subunit (466 aa).

[4Fe-4S] cluster is bound by residues Cys347, Cys407, and Cys410.

It belongs to the aconitase/IPM isomerase family. LeuC type 1 subfamily. As to quaternary structure, heterodimer of LeuC and LeuD. [4Fe-4S] cluster serves as cofactor.

The catalysed reaction is (2R,3S)-3-isopropylmalate = (2S)-2-isopropylmalate. Its pathway is amino-acid biosynthesis; L-leucine biosynthesis; L-leucine from 3-methyl-2-oxobutanoate: step 2/4. In terms of biological role, catalyzes the isomerization between 2-isopropylmalate and 3-isopropylmalate, via the formation of 2-isopropylmaleate. The chain is 3-isopropylmalate dehydratase large subunit from Klebsiella pneumoniae subsp. pneumoniae (strain ATCC 700721 / MGH 78578).